Reading from the N-terminus, the 185-residue chain is Threonylcarbamoyl-AMP synthase (185 aa).

A YrdC-like domain is found at 4–185; sequence SWRVQQAAQN…IATGQVMRAG (182 aa).

It belongs to the SUA5 family. TsaC subfamily.

It is found in the cytoplasm. The catalysed reaction is L-threonine + hydrogencarbonate + ATP = L-threonylcarbamoyladenylate + diphosphate + H2O. Required for the formation of a threonylcarbamoyl group on adenosine at position 37 (t(6)A37) in tRNAs that read codons beginning with adenine. Catalyzes the conversion of L-threonine, HCO(3)(-)/CO(2) and ATP to give threonylcarbamoyl-AMP (TC-AMP) as the acyladenylate intermediate, with the release of diphosphate. The chain is Threonylcarbamoyl-AMP synthase from Pseudomonas syringae pv. tomato (strain ATCC BAA-871 / DC3000).